Here is a 375-residue protein sequence, read N- to C-terminus: MAVGDKITISVIKADIGGWPGHSRVHPQLVETAEDVLSKAVEDGTIIDFYVATCGDDLQLIMTHKRGVDSPDIHGLAWKAFEEATKVAKELGLYGAGQDLLKDAFSGNVRGMGPGVAEMEITLRKSEPVVTFHMDKTEPGAFNLPIFRMFADPFNTAGLIIDPKMHMGFRFEVWDILEHKRVILNTPEELYDLLALIGAKSRYVIKRVYPKPGHPIPENEPVAVVSTEKLYEVAGEYVGKDDPVAIVRAQSGLPALGEVLEPFAFPHLVSGWMRGSHNGPLMPVPMHQANPTRFDGPPRVVALGWQISPEGKLVGPVDLFDDPAFDYARQKALEITEYMRRHGPFEPHRLPLEEMEYTTLPGVLKRLTDRFEPIE.

Residue D15 is the Proton acceptor; for FBP phosphatase activity of the active site. Residues D15, H22, D56, and D57 each coordinate Mg(2+). Residue H22 participates in beta-D-fructose 1,6-bisphosphate binding. H22 serves as a coordination point for dihydroxyacetone phosphate. Y94 provides a ligand contact to beta-D-fructose 1,6-bisphosphate. Q98 serves as a coordination point for Mg(2+). Residue 107–108 participates in beta-D-fructose 1,6-bisphosphate binding; it reads GN. Residue D135 coordinates Mg(2+). K136 contributes to the beta-D-fructose 1,6-bisphosphate binding site. K136 is a binding site for dihydroxyacetone phosphate. Catalysis depends on Y237, which acts as the Proton donor/acceptor; for FBP aldolase activity. Positions 240, 241, and 242 each coordinate Mg(2+). Catalysis depends on K240, which acts as the Schiff-base intermediate with DHAP; for FBP aldolase activity. Beta-D-fructose 1,6-bisphosphate contacts are provided by residues 250 to 251, R274, D295, and Y357; that span reads QS. Residues R274 and D295 each contribute to the dihydroxyacetone phosphate site.

This sequence belongs to the FBP aldolase/phosphatase family. As to quaternary structure, homooctamer; dimer of tetramers. The cofactor is Mg(2+).

It carries out the reaction beta-D-fructose 1,6-bisphosphate + H2O = beta-D-fructose 6-phosphate + phosphate. The enzyme catalyses beta-D-fructose 1,6-bisphosphate = D-glyceraldehyde 3-phosphate + dihydroxyacetone phosphate. It functions in the pathway carbohydrate biosynthesis; gluconeogenesis. With respect to regulation, activity is enhanced by dithioerythritol, and is slightly inhibited by fructose 2,6-bisphosphate. AMP does not inhibit the enzyme activity. Catalyzes two subsequent steps in gluconeogenesis: the aldol condensation of dihydroxyacetone phosphate (DHAP) and glyceraldehyde-3-phosphate (GA3P) to fructose-1,6-bisphosphate (FBP), and the dephosphorylation of FBP to fructose-6-phosphate (F6P). Does not display hydrolase activity against fructose 2,6-bisphosphate, fructose 6-phosphate, fructose 1-phosphate, glucose 6-phosphate, and glucose 1-phosphate. Exhibits only negligible activity on inositol-1-phosphate (IMP). Is essential for the growth of T.kodakaraensis under gluconeogenic conditions. The sequence is that of Fructose-1,6-bisphosphate aldolase/phosphatase from Thermococcus kodakarensis (strain ATCC BAA-918 / JCM 12380 / KOD1) (Pyrococcus kodakaraensis (strain KOD1)).